A 626-amino-acid chain; its full sequence is PEX5-related protein (626 aa).

3 disordered regions span residues 1-20 (MYQG…LSSD), 118-167 (VSQT…SSLD), and 181-235 (KFHG…ASEL). The span at 181-198 (KFHGDRNTKGHPMAERKS) shows a compositional bias: basic and acidic residues. A Phosphoserine modification is found at Ser205. A compositionally biased stretch (low complexity) spans 225–235 (SALNSESASEL). Phosphoserine is present on residues Ser253, Ser257, and Ser261. 3 TPR repeats span residues 326–359 (WPGA…DPGD), 360–393 (AEAW…QPNN), and 395–427 (KALM…NPKY). Phosphoserine is present on residues Ser445 and Ser447. 3 TPR repeats span residues 474 to 507 (PDLQ…RPED), 509 to 541 (SLWN…QPGF), and 543 to 575 (RSRY…QRKS).

It belongs to the peroxisomal targeting signal receptor family. Interacts with RAB8B. Forms an obligate 4:4 complex with HCN2. May interact with the C-terminal PTS1-type tripeptide peroxisomal targeting signal (SKL-type); the relevance of such interaction is however unclear. Interacts with HCN3. Interacts with HCN4 with a 4:4 HCN4:PEX5L stoichiometry; reduces the effects of cAMP on the voltage-dependence and rate of activation of HCN4. In terms of tissue distribution, mainly expressed in brain. Also expressed in pancreas, testis and pituitary.

It is found in the cytoplasm. Its subcellular location is the membrane. In terms of biological role, accessory subunit of hyperpolarization-activated cyclic nucleotide-gated (HCN) channels, regulating their cell-surface expression and cyclic nucleotide dependence. In Homo sapiens (Human), this protein is PEX5-related protein (PEX5L).